A 282-amino-acid polypeptide reads, in one-letter code: Aquaporin PIP-type (282 aa).

The next 2 membrane-spanning stretches (helical) occupy residues 39-61 and 74-96; these read WRAA…ATVI and GLLG…TAGI. The short motif at 102 to 104 is the NPA 1 element; sequence NPA. Transmembrane regions (helical) follow at residues 116-138, 159-181, 201-223, and 243-265; these read SLLR…VGLV, GYNK…YTVF, LPIG…TGIN, and HWIF…QYVL. Residues 223-225 carry the NPA 2 motif; it reads NPA.

The protein belongs to the MIP/aquaporin (TC 1.A.8) family. PIP (TC 1.A.8.11) subfamily.

The protein resides in the membrane. Water-specific channel. This chain is Aquaporin PIP-type, found in Atriplex canescens (Fourwing saltbush).